We begin with the raw amino-acid sequence, 473 residues long: Cysteine--tRNA ligase (473 aa).

C30 contributes to the Zn(2+) binding site. The 'HIGH' region motif lies at 32 to 42 (MTVYDYCHIGH). Residues C213, H238, and E242 each coordinate Zn(2+). The 'KMSKS' region motif lies at 270-274 (KMSKS). K273 provides a ligand contact to ATP.

This sequence belongs to the class-I aminoacyl-tRNA synthetase family. As to quaternary structure, monomer. Zn(2+) serves as cofactor.

The protein resides in the cytoplasm. It carries out the reaction tRNA(Cys) + L-cysteine + ATP = L-cysteinyl-tRNA(Cys) + AMP + diphosphate. The protein is Cysteine--tRNA ligase of Acinetobacter baumannii (strain SDF).